The sequence spans 135 residues: Large ribosomal subunit protein uL16c (135 aa).

The protein belongs to the universal ribosomal protein uL16 family. Part of the 50S ribosomal subunit.

It localises to the plastid. It is found in the chloroplast. The sequence is that of Large ribosomal subunit protein uL16c from Daucus carota (Wild carrot).